The following is a 195-amino-acid chain: Glycerol-3-phosphate acyltransferase (195 aa).

5 helical membrane-spanning segments follow: residues 2-22, 52-72, 78-98, 112-132, and 145-165; these read LWIF…GLFI, YGVA…LMAY, WIFI…SIFM, VFLA…LAVI, and FAVA…VPLA.

This sequence belongs to the PlsY family. As to quaternary structure, probably interacts with PlsX.

The protein localises to the cell inner membrane. The catalysed reaction is an acyl phosphate + sn-glycerol 3-phosphate = a 1-acyl-sn-glycero-3-phosphate + phosphate. It functions in the pathway lipid metabolism; phospholipid metabolism. Functionally, catalyzes the transfer of an acyl group from acyl-phosphate (acyl-PO(4)) to glycerol-3-phosphate (G3P) to form lysophosphatidic acid (LPA). This enzyme utilizes acyl-phosphate as fatty acyl donor, but not acyl-CoA or acyl-ACP. This Maridesulfovibrio salexigens (strain ATCC 14822 / DSM 2638 / NCIMB 8403 / VKM B-1763) (Desulfovibrio salexigens) protein is Glycerol-3-phosphate acyltransferase.